The following is a 158-amino-acid chain: Large ribosomal subunit protein uL11 (158 aa).

Belongs to the universal ribosomal protein uL11 family. Part of the ribosomal stalk of the 50S ribosomal subunit. Interacts with L10 and the large rRNA to form the base of the stalk. L10 forms an elongated spine to which L12 dimers bind in a sequential fashion forming a multimeric L10(L12)X complex.

Its function is as follows. Forms part of the ribosomal stalk which helps the ribosome interact with GTP-bound translation factors. This chain is Large ribosomal subunit protein uL11, found in Methanoculleus marisnigri (strain ATCC 35101 / DSM 1498 / JR1).